Consider the following 431-residue polypeptide: Divalent metal cation transporter MntH (431 aa).

Transmembrane regions (helical) follow at residues 30–50 (WSWT…IDPG), 63–83 (GYTL…IQTL), 106–126 (PLVW…DLAE), 137–159 (LFGL…ALHL), 169–189 (ILIG…LVLS), 209–229 (YALY…VIYL), 257–277 (VILG…MAAA), 287–307 (VATI…VTAS), 309–329 (VFGL…TLSG), 341–361 (IPLW…IMLG), 367–387 (ALVA…VPLL), and 405–425 (VTGV…YVLF).

The protein belongs to the NRAMP family.

It localises to the cell inner membrane. H(+)-stimulated, divalent metal cation uptake system. This is Divalent metal cation transporter MntH from Chromohalobacter salexigens (strain ATCC BAA-138 / DSM 3043 / CIP 106854 / NCIMB 13768 / 1H11).